Reading from the N-terminus, the 234-residue chain is Demethylmenaquinone methyltransferase (234 aa).

S-adenosyl-L-methionine is bound by residues threonine 58, aspartate 79, and 106–107; that span reads NA.

It belongs to the class I-like SAM-binding methyltransferase superfamily. MenG/UbiE family.

The enzyme catalyses a 2-demethylmenaquinol + S-adenosyl-L-methionine = a menaquinol + S-adenosyl-L-homocysteine + H(+). Its pathway is quinol/quinone metabolism; menaquinone biosynthesis; menaquinol from 1,4-dihydroxy-2-naphthoate: step 2/2. Methyltransferase required for the conversion of demethylmenaquinol (DMKH2) to menaquinol (MKH2). This Geobacillus kaustophilus (strain HTA426) protein is Demethylmenaquinone methyltransferase.